Reading from the N-terminus, the 503-residue chain is Cytochrome P450 6l1 (503 aa).

Cysteine 438 serves as a coordination point for heme.

Belongs to the cytochrome P450 family. Heme is required as a cofactor. In terms of tissue distribution, detected only in testes and accessory glands of male adults.

It is found in the endoplasmic reticulum membrane. Its subcellular location is the microsome membrane. The chain is Cytochrome P450 6l1 (CYP6L1) from Blattella germanica (German cockroach).